Consider the following 308-residue polypeptide: MKHLTGLCELPLYEIQRLLDLAAVFKKELRTKAPAFAPTLLSKKIALAFFENSTRTRFSFEIAAKHLGASTLNFTASSSSVSKGETLGDTIKNLEAMQVDAFVIRHPSSGAADLITGITSKSVINAGDGSHEHPTQALLDMFTLKEHFGSLEGLNVFILGDILHSRVARSNIFGMLTLGANVALCSPSTLLPPGTSDLGIRIFTDLDQAIQWADAAIVLRLQLERATGGYLPSLGEYAVHFGLTDERLERIRKHLLVLHPGPINREIEISSRVADRMQPPGFSSSLLLQQVTNGIAVRMAVLQTLLAE.

2 residues coordinate carbamoyl phosphate: R55 and T56. K83 is a binding site for L-aspartate. Carbamoyl phosphate is bound by residues R105, H133, and Q136. Residues R166 and R220 each coordinate L-aspartate. Carbamoyl phosphate contacts are provided by G261 and P262.

Belongs to the aspartate/ornithine carbamoyltransferase superfamily. ATCase family. In terms of assembly, heterododecamer (2C3:3R2) of six catalytic PyrB chains organized as two trimers (C3), and six regulatory PyrI chains organized as three dimers (R2).

It carries out the reaction carbamoyl phosphate + L-aspartate = N-carbamoyl-L-aspartate + phosphate + H(+). It functions in the pathway pyrimidine metabolism; UMP biosynthesis via de novo pathway; (S)-dihydroorotate from bicarbonate: step 2/3. Catalyzes the condensation of carbamoyl phosphate and aspartate to form carbamoyl aspartate and inorganic phosphate, the committed step in the de novo pyrimidine nucleotide biosynthesis pathway. In Chlorobium phaeobacteroides (strain DSM 266 / SMG 266 / 2430), this protein is Aspartate carbamoyltransferase catalytic subunit.